The primary structure comprises 211 residues: Mediator-associated protein 2 (211 aa).

The segment at 128 to 211 (QQKLVGSVTN…KSKKKVKKEE (84 aa)) is disordered. Positions 134–148 (SVTNSSKKSSNLTQS) are enriched in low complexity. Position 173 is a phosphoserine (Ser173). The span at 189-198 (STSTVSGSSE) shows a compositional bias: low complexity. A compositionally biased stretch (basic residues) spans 202-211 (KSKKKVKKEE).

As to quaternary structure, associated with the Mediator complex.

It is found in the nucleus. This chain is Mediator-associated protein 2, found in Arabidopsis thaliana (Mouse-ear cress).